The primary structure comprises 382 residues: Lipid-A-disaccharide synthase (382 aa).

This sequence belongs to the LpxB family.

The enzyme catalyses 2-N,3-O-bis[(3R)-3-hydroxytetradecanoyl]-alpha-D-glucosaminyl 1-phosphate + UDP-2-N,3-O-bis[(3R)-3-hydroxytetradecanoyl]-alpha-D-glucosamine = lipid A disaccharide (E. coli) + UDP + H(+). It carries out the reaction a lipid X + a UDP-2-N,3-O-bis[(3R)-3-hydroxyacyl]-alpha-D-glucosamine = a lipid A disaccharide + UDP + H(+). Its pathway is glycolipid biosynthesis; lipid IV(A) biosynthesis; lipid IV(A) from (3R)-3-hydroxytetradecanoyl-[acyl-carrier-protein] and UDP-N-acetyl-alpha-D-glucosamine: step 5/6. In terms of biological role, condensation of UDP-2,3-diacylglucosamine and 2,3-diacylglucosamine-1-phosphate to form lipid A disaccharide, a precursor of lipid A, a phosphorylated glycolipid that anchors the lipopolysaccharide to the outer membrane of the cell. The protein is Lipid-A-disaccharide synthase of Sodalis glossinidius (strain morsitans).